The following is a 506-amino-acid chain: MFSLQDICRKHLFLLPSSFNEYILQVLGLYWEKHGSLQRIRKDAVFVQRNITLSTNEALRIAASEGNERVVKLLLSWEGNFHYVIIGALEGDQYDLIHKYNSQIKDYHVILSSIQNANTFEKCHQLYNCTMWRLVQNAIKYNMLSILQKHRNLLTDEGDNQELFEKACEEQKYDIVLWIGQTLMLDEPKSIFDIALERIDFSLLIMGYSLLFANKMSSIDIHDEEDLTSLLTEHLEKAATKGCLFFMQETLKHGGNVNIAVLSKAVEYNHRKILDYFIRRQKCLSRKDIEKLLLIAIKDGGSKKTLNLLLSYLNYSVQNMIGKIVEAVINDGDFTIIIILKKKKINLVDSVLAGFLDHFHTYCFIKVFIHEFAIRPEKIIKMAARKDKLDIIIEFFNDIYPHKDDLGTILNILKNIVNTMKHKEGKEVLIGLIHKIYRIIHLENKEMFNLVRFYIMHNANIQFISICKDCFNLAGFKPFLSECLDIAIKKNYPDIVRNIKIQLKYE.

Belongs to the asfivirus MGF 505 family.

Plays a role in virus cell tropism, and may be required for efficient virus replication in macrophages. The chain is Protein MGF 505-4R from Ornithodoros (relapsing fever ticks).